The primary structure comprises 160 residues: Lipoprotein signal peptidase (160 aa).

2 helical membrane passes run 60–80 (IEWLIAASVLGVILAMTAFFI) and 84–104 (LPFLDTRPGLIALGVILAGTV). Catalysis depends on residues D118 and D132. Residues 128-148 (FNIADSCLTVGVIGLLLLYIV) form a helical membrane-spanning segment.

Belongs to the peptidase A8 family.

It localises to the cell membrane. The enzyme catalyses Release of signal peptides from bacterial membrane prolipoproteins. Hydrolyzes -Xaa-Yaa-Zaa-|-(S,diacylglyceryl)Cys-, in which Xaa is hydrophobic (preferably Leu), and Yaa (Ala or Ser) and Zaa (Gly or Ala) have small, neutral side chains.. Its pathway is protein modification; lipoprotein biosynthesis (signal peptide cleavage). Functionally, this protein specifically catalyzes the removal of signal peptides from prolipoproteins. This is Lipoprotein signal peptidase from Dehalococcoides mccartyi (strain CBDB1).